Consider the following 140-residue polypeptide: Nucleoside diphosphate kinase (140 aa).

ATP is bound by residues K11, F59, R87, T93, R104, and N114. Residue H117 is the Pros-phosphohistidine intermediate of the active site.

It belongs to the NDK family. As to quaternary structure, homotetramer. Mg(2+) serves as cofactor.

It is found in the cytoplasm. The catalysed reaction is a 2'-deoxyribonucleoside 5'-diphosphate + ATP = a 2'-deoxyribonucleoside 5'-triphosphate + ADP. It carries out the reaction a ribonucleoside 5'-diphosphate + ATP = a ribonucleoside 5'-triphosphate + ADP. Functionally, major role in the synthesis of nucleoside triphosphates other than ATP. The ATP gamma phosphate is transferred to the NDP beta phosphate via a ping-pong mechanism, using a phosphorylated active-site intermediate. The protein is Nucleoside diphosphate kinase of Methylobacterium radiotolerans (strain ATCC 27329 / DSM 1819 / JCM 2831 / NBRC 15690 / NCIMB 10815 / 0-1).